Reading from the N-terminus, the 1096-residue chain is Pullulanase (1096 aa).

A signal peptide spans 1 to 19; the sequence is MLRYTCHALFLGSLVLLSG. A lipid anchor (N-palmitoyl cysteine) is attached at cysteine 20. Residue cysteine 20 is the site of S-diacylglycerol cysteine attachment. Positions 24 to 34 are enriched in low complexity; it reads SSSSTSGSPGS. Residues 24 to 50 form a disordered region; it reads SSSSTSGSPGSPGNPGNPGTPGTPDPQ. Aspartate 694 serves as the catalytic Nucleophile. Residue glutamate 723 is the Proton donor of the active site. Residues 1014 to 1044 form a disordered region; the sequence is QAGRQSGQPCRRHRGGDQRRAGKPDAAGLRR.

The protein belongs to the glycosyl hydrolase 13 family. As to quaternary structure, homotrimer.

It is found in the cell membrane. The enzyme catalyses Hydrolysis of (1-&gt;6)-alpha-D-glucosidic linkages in pullulan, amylopectin and glycogen, and in the alpha- and beta-limit dextrins of amylopectin and glycogen.. The protein is Pullulanase (pulA) of Klebsiella aerogenes (Enterobacter aerogenes).